The sequence spans 145 residues: I-leader protein (145 aa).

It localises to the host cytoplasm. The protein resides in the host perinuclear region. The polypeptide is I-leader protein (Human adenovirus C serotype 2 (HAdV-2)).